A 284-amino-acid chain; its full sequence is Bifunctional protein FolD (284 aa).

Residues 165–167 (GRS) and S190 contribute to the NADP(+) site.

Belongs to the tetrahydrofolate dehydrogenase/cyclohydrolase family. As to quaternary structure, homodimer.

The catalysed reaction is (6R)-5,10-methylene-5,6,7,8-tetrahydrofolate + NADP(+) = (6R)-5,10-methenyltetrahydrofolate + NADPH. The enzyme catalyses (6R)-5,10-methenyltetrahydrofolate + H2O = (6R)-10-formyltetrahydrofolate + H(+). It participates in one-carbon metabolism; tetrahydrofolate interconversion. Catalyzes the oxidation of 5,10-methylenetetrahydrofolate to 5,10-methenyltetrahydrofolate and then the hydrolysis of 5,10-methenyltetrahydrofolate to 10-formyltetrahydrofolate. This Streptococcus pyogenes serotype M28 (strain MGAS6180) protein is Bifunctional protein FolD.